The chain runs to 322 residues: Serine/threonine-protein phosphatase PP1-2 (322 aa).

Aspartate 60, histidine 62, aspartate 88, and asparagine 120 together coordinate Mn(2+). Residue histidine 121 is the Proton donor of the active site. Positions 169 and 244 each coordinate Mn(2+). Residues arginine 298 to asparagine 322 form a disordered region. The span at valine 301–leucine 316 shows a compositional bias: polar residues.

Belongs to the PPP phosphatase family. PP-1 subfamily. Requires Mn(2+) as cofactor.

It carries out the reaction O-phospho-L-seryl-[protein] + H2O = L-seryl-[protein] + phosphate. The catalysed reaction is O-phospho-L-threonyl-[protein] + H2O = L-threonyl-[protein] + phosphate. Functionally, essential role in cell cycle control. PP1 is perhaps required for exit from mitosis. This chain is Serine/threonine-protein phosphatase PP1-2 (sds21), found in Schizosaccharomyces pombe (strain 972 / ATCC 24843) (Fission yeast).